A 385-amino-acid chain; its full sequence is Period circadian protein (385 aa).

3 disordered regions span residues 28 to 121 (TAPV…VPPV), 169 to 189 (GPGP…WEGE), and 322 to 351 (SPAS…TSQG). The segment covering 71–93 (SGNFTTGSNLHMSSVTNTSNAGT) has biased composition (low complexity). Residues 94-115 (GTSGTGNSGDGGGGGAGDGPGS) show a composition bias toward gly residues. Polar residues predominate over residues 340–351 (HPSSEQPSTSQG).

As to quaternary structure, forms a heterodimer with timeless (TIM); the complex then translocates into the nucleus. Phosphorylated with a circadian rhythmicity, probably by the double-time protein (dbt). Phosphorylation could be implicated in the stability of per monomer and in the formation of heterodimer per-tim.

The protein localises to the nucleus. It is found in the cytoplasm. The protein resides in the perinuclear region. Essential for biological clock functions. Determines the period length of circadian and ultradian rhythms; an increase in PER dosage leads to shortened circadian rhythms and a decrease leads to lengthened circadian rhythms. Essential for the circadian rhythmicity of locomotor activity, eclosion behavior, and for the rhythmic component of the male courtship song that originates in the thoracic nervous system. The biological cycle depends on the rhythmic formation and nuclear localization of the TIM-PER complex. Light induces the degradation of TIM, which promotes elimination of PER. Nuclear activity of the heterodimer coordinatively regulates PER and TIM transcription through a negative feedback loop. Behaves as a negative element in circadian transcriptional loop. Does not appear to bind DNA, suggesting indirect transcriptional inhibition. In Drosophila nebulosa (Fruit fly), this protein is Period circadian protein (per).